Reading from the N-terminus, the 50-residue chain is Large ribosomal subunit protein bL33B (50 aa).

It belongs to the bacterial ribosomal protein bL33 family.

The polypeptide is Large ribosomal subunit protein bL33B (Metamycoplasma arthritidis (strain 158L3-1) (Mycoplasma arthritidis)).